Reading from the N-terminus, the 384-residue chain is Putative ankyrin repeat protein L72 (384 aa).

ANK repeat units lie at residues 88-117 (ADMC…NIKN), 119-146 (GNLL…KEFS), 171-200 (DHNV…ILSV), 202-231 (DDSL…DIES), 233-261 (NNYC…NPNN), 298-324 (ILYQ…AGIK), and 325-357 (PTNS…DINV).

In Acanthamoeba polyphaga (Amoeba), this protein is Putative ankyrin repeat protein L72.